Consider the following 62-residue polypeptide: Large ribosomal subunit protein bL28 (62 aa).

The protein belongs to the bacterial ribosomal protein bL28 family.

In Phytoplasma mali (strain AT), this protein is Large ribosomal subunit protein bL28.